The sequence spans 484 residues: Replication-associated protein (484 aa).

A Nuclear localization signal motif is present at residues I146–V153.

The protein localises to the host nucleus. Its function is as follows. Plays an essential for the replication of viral DNA. Presumably cleaves viral genomic dsRNA replicative form to initiate rolling circle replication. The protein is Replication-associated protein of Chaetoceros (Chaetoceros sp. DNA virus 7).